The following is a 261-amino-acid chain: Thiazole synthase (261 aa).

K101 serves as the catalytic Schiff-base intermediate with DXP. Residues G162, 188-189 (AG), and 210-211 (NT) contribute to the 1-deoxy-D-xylulose 5-phosphate site.

Belongs to the ThiG family. As to quaternary structure, homotetramer. Forms heterodimers with either ThiH or ThiS.

The protein localises to the cytoplasm. It catalyses the reaction [ThiS sulfur-carrier protein]-C-terminal-Gly-aminoethanethioate + 2-iminoacetate + 1-deoxy-D-xylulose 5-phosphate = [ThiS sulfur-carrier protein]-C-terminal Gly-Gly + 2-[(2R,5Z)-2-carboxy-4-methylthiazol-5(2H)-ylidene]ethyl phosphate + 2 H2O + H(+). It functions in the pathway cofactor biosynthesis; thiamine diphosphate biosynthesis. Its function is as follows. Catalyzes the rearrangement of 1-deoxy-D-xylulose 5-phosphate (DXP) to produce the thiazole phosphate moiety of thiamine. Sulfur is provided by the thiocarboxylate moiety of the carrier protein ThiS. In vitro, sulfur can be provided by H(2)S. The chain is Thiazole synthase from Azoarcus sp. (strain BH72).